A 319-amino-acid polypeptide reads, in one-letter code: D-alanine--D-alanine ligase (319 aa).

A disordered region spans residues 1–23 (MTGPEWAHTRGTKVGQSSRTPPK). Positions 120–313 (KDAFVAAGLP…FGKLCAWMVE (194 aa)) constitute an ATP-grasp domain. 147–197 (MQPPYVVKPNNEGSSVGVYLVHEAANGPPQLSEDMPQEVMVEAFAPGRELT) lines the ATP pocket. Mg(2+)-binding residues include D264, E280, and N282.

This sequence belongs to the D-alanine--D-alanine ligase family. Mg(2+) serves as cofactor. The cofactor is Mn(2+).

It localises to the cytoplasm. The enzyme catalyses 2 D-alanine + ATP = D-alanyl-D-alanine + ADP + phosphate + H(+). It participates in cell wall biogenesis; peptidoglycan biosynthesis. Its function is as follows. Cell wall formation. The sequence is that of D-alanine--D-alanine ligase from Roseobacter denitrificans (strain ATCC 33942 / OCh 114) (Erythrobacter sp. (strain OCh 114)).